Here is a 367-residue protein sequence, read N- to C-terminus: Pectate trisaccharide-lyase (367 aa).

The signal sequence occupies residues 1–27; it reads MLMRFSRVVSLVLLLVFTAVLTGAVKA. The Ca(2+) site is built by D144, D166, and D170. The stretch at 151 to 173 is one PbH1 1 repeat; sequence SHHIWIDHCTFVNGNDGAVDIKK. The active site involves R224. One copy of the PbH1 2 repeat lies at 263–289; that stretch reads GAKVHVEGNYFMGYGAVMAEAGIAFLP.

This sequence belongs to the polysaccharide lyase 1 family. Homotetramer. Requires Ca(2+) as cofactor.

The protein localises to the secreted. It catalyses the reaction eliminative cleavage of unsaturated trigalacturonate as the major product from the reducing end of polygalacturonic acid/pectate.. Its activity is regulated as follows. Completely inactivated by EGTA. Cleaves unsaturated trigalacturonate from pectin. Activity is highest towards polygalacturonic acid, activity on methylated pectins decreases with an increasing degree of methylation. The polypeptide is Pectate trisaccharide-lyase (Thermotoga maritima (strain ATCC 43589 / DSM 3109 / JCM 10099 / NBRC 100826 / MSB8)).